The primary structure comprises 389 residues: 1-acyl-sn-glycerol-3-phosphate acyltransferase 2 (389 aa).

The chain crosses the membrane as a helical span at residues V2–V22. Residues H91–D96 carry the HXXXXD motif motif. 2 helical membrane passes run L305–W325 and K333–I353. Positions Q357–K389 are disordered. Basic and acidic residues predominate over residues K370–K389.

This sequence belongs to the 1-acyl-sn-glycerol-3-phosphate acyltransferase family. As to quaternary structure, interacts with GPAT9 and DGAT1. In terms of tissue distribution, present in roots, leaves, stems, floral buds and siliques (at protein level). Widely expressed. In contrast to LPAT1, it is not expressed at higher level in leaves.

Its subcellular location is the endoplasmic reticulum membrane. The catalysed reaction is a 1-acyl-sn-glycero-3-phosphate + an acyl-CoA = a 1,2-diacyl-sn-glycero-3-phosphate + CoA. The protein operates within phospholipid metabolism; CDP-diacylglycerol biosynthesis; CDP-diacylglycerol from sn-glycerol 3-phosphate: step 2/3. Functionally, converts lysophosphatidic acid (LPA) into phosphatidic acid by incorporating acyl moiety at the 2 position. Has preference for C-18-CoA substrates compared to C-16-CoA substrates. Required for female but not male gametophyte development. The sequence is that of 1-acyl-sn-glycerol-3-phosphate acyltransferase 2 (LPAT2) from Arabidopsis thaliana (Mouse-ear cress).